The following is a 330-amino-acid chain: Exostosin-like 2 (330 aa).

Residues 1–21 (MMRGCHICKLPGRVMGIRVLR) lie on the Cytoplasmic side of the membrane. Residues 22 to 42 (FSLVVILVLLLVAGALTNLLP) form a helical; Signal-anchor for type II membrane protein membrane-spanning segment. Residues 43–330 (NIKEDKMLTL…FPYANHKSKM (288 aa)) lie on the Lumenal side of the membrane. A UDP-N-acetyl-alpha-D-galactosamine-binding site is contributed by Gln72. Gln72 is a binding site for UDP-N-acetyl-alpha-D-glucosamine. An N-linked (GlcNAc...) asparagine glycan is attached at Asn75. UDP-N-acetyl-alpha-D-galactosamine contacts are provided by Arg76, Asn101, Asn130, Arg135, Asp151, Asp152, Asp153, and Asp245. Arg76, Asn101, Asn130, Arg135, Asp151, Asp152, Asp153, Asp245, Asp246, and Arg293 together coordinate UDP-N-acetyl-alpha-D-glucosamine. Asp153 provides a ligand contact to Mn(2+). A disulfide bridge links Cys244 with Cys296. Asp246 is an active-site residue. Arg293 provides a ligand contact to UDP-N-acetyl-alpha-D-galactosamine.

The protein belongs to the glycosyltransferase 47 family. It depends on Mn(2+) as a cofactor.

Its subcellular location is the endoplasmic reticulum membrane. The enzyme catalyses 3-O-(beta-D-GlcA-(1-&gt;3)-beta-D-Gal-(1-&gt;3)-beta-D-Gal-(1-&gt;4)-beta-D-Xyl)-L-seryl-[protein] + UDP-N-acetyl-alpha-D-glucosamine = 3-O-(alpha-D-GlcNAc-(1-&gt;4)-beta-D-GlcA-(1-&gt;3)-beta-D-Gal-(1-&gt;3)-beta-D-Gal-(1-&gt;4)-beta-D-Xyl)-L-seryl-[protein] + UDP + H(+). Functionally, glycosyltransferase required for the biosynthesis of heparan-sulfate and responsible for the alternating addition of beta-1-4-linked glucuronic acid (GlcA) and alpha-1-4-linked N-acetylglucosamine (GlcNAc) units to nascent heparan sulfate chains. The protein is Exostosin-like 2 (Extl2) of Mus musculus (Mouse).